We begin with the raw amino-acid sequence, 510 residues long: Histidine ammonia-lyase (510 aa).

The segment at residues 143–145 is a cross-link (5-imidazolinone (Ala-Gly)); that stretch reads ASG. Ser144 bears the 2,3-didehydroalanine (Ser) mark.

It belongs to the PAL/histidase family. Contains an active site 4-methylidene-imidazol-5-one (MIO), which is formed autocatalytically by cyclization and dehydration of residues Ala-Ser-Gly.

It is found in the cytoplasm. The catalysed reaction is L-histidine = trans-urocanate + NH4(+). It functions in the pathway amino-acid degradation; L-histidine degradation into L-glutamate; N-formimidoyl-L-glutamate from L-histidine: step 1/3. The sequence is that of Histidine ammonia-lyase from Photobacterium profundum (strain SS9).